Consider the following 146-residue polypeptide: Small ribosomal subunit protein uS5 (146 aa).

An S5 DRBM domain is found at F8–V71.

The protein belongs to the universal ribosomal protein uS5 family. As to quaternary structure, part of the 30S ribosomal subunit. Contacts proteins S4 and S8.

In terms of biological role, with S4 and S12 plays an important role in translational accuracy. Located at the back of the 30S subunit body where it stabilizes the conformation of the head with respect to the body. The sequence is that of Small ribosomal subunit protein uS5 from Helicobacter hepaticus (strain ATCC 51449 / 3B1).